The sequence spans 1849 residues: SH3 and multiple ankyrin repeat domains protein 2 (1849 aa).

Positions 1-33 are disordered; sequence MPRSPTSSEDEMAQSFSDYSVGSESDSSKEETI. Positions 15–25 are enriched in low complexity; that stretch reads SFSDYSVGSES. ANK repeat units lie at residues 196–226, 230–259, 263–293, 297–326, 330–359, and 363–393; these read TGET…HLDF, DGMT…SPDY, YGLT…TVCC, NGWH…DMSA, SGNT…NKEL, and NSQT…DIVP. The disordered stretch occupies residues 451-493; it reads QQMPSKPEGAAKTIGSYVPGPRSRSPSLNRLGGAGEDGKRPQP. The SH3 domain maps to 526 to 585; the sequence is VPGRLFVAVKPYQPQVDGEIPLHRGDRVKVLSIGEGGFWEGSARGHIGWFPAECVEEVQC. Residues 626 to 720 enclose the PDZ domain; sequence TVVLQKKDNE…HLVLKVVTVT (95 aa). Residues 764–774 are compositionally biased toward basic and acidic residues; it reads SVRKKKDKPEE. The interval 764–808 is disordered; that stretch reads SVRKKKDKPEEIVPASKPSRAAENMAVEPRVATIKQRPSSRCFPA. S831 is subject to Phosphoserine. Phosphothreonine is present on T860. Residues 878–910 form a disordered region; sequence LSMPDTSEDIPPPPQSVPPSPPPPSPTTYNCPK. The segment covering 887 to 903 has biased composition (pro residues); the sequence is IPPPPQSVPPSPPPPSP. A Phosphoserine modification is found at S960. Disordered stretches follow at residues 1013–1293, 1328–1371, 1432–1526, and 1574–1594; these read LVKQ…RKGD, LQEE…TTVP, PALS…GGEN, and SFVI…PGMA. The span at 1040–1052 shows a compositional bias: low complexity; sequence STSSSGKSSQGSS. The segment covering 1086–1097 has biased composition (basic and acidic residues); the sequence is VRDREKRLEARR. At S1099 the chain carries Phosphoserine. Residues 1128 to 1138 are compositionally biased toward acidic residues; the sequence is EEGDFADEDSA. Low complexity-rich tracts occupy residues 1159-1170, 1181-1199, and 1208-1221; these read GGAEASAPGEAG, GPES…AGPG, and RLLD…LALS. The span at 1274-1293 shows a compositional bias: basic and acidic residues; the sequence is RRQETENKYETDLGRDRKGD. Residue T1278 is modified to Phosphothreonine. The SH3-binding motif lies at 1327-1333; the sequence is ALQEEDE. Over residues 1343-1357 the composition is skewed to low complexity; that stretch reads SSPSEVPEGVSETEG. Residues 1445–1460 are compositionally biased toward polar residues; the sequence is TPQSPSLNSSQPTNSA. The span at 1494–1505 shows a compositional bias: basic and acidic residues; sequence VDSRSSSDHHLE. Residues 1506–1522 are compositionally biased toward low complexity; it reads TTSTISTVSSISTLSSE. Positions 1577–1588 are enriched in pro residues; sequence IPPPAPPPPPGS. The O-linked (GlcNAc) threonine glycan is linked to T1667. Positions 1678-1692 are enriched in polar residues; that stretch reads FTVRPGTSQPITLQS. Residues 1678-1776 are disordered; sequence FTVRPGTSQP…SILQQPISNK (99 aa). A phosphoserine mark is found at S1709 and S1713. Low complexity-rich tracts occupy residues 1721-1738 and 1760-1774; these read TLPA…PALS and RSRS…QPIS. The SAM domain maps to 1786–1849; the sequence is WTKPDVADWL…ERALKQLLDR (64 aa).

Belongs to the SHANK family. In terms of assembly, is part of a complex with DLG4/PSD-95 and DLGAP1/GKAP. Interacts with CTTN/cortactin SH3 domain, DLGAP1/GKAP and alpha-latrotoxin receptor 1. Interacts with DNM2, DBNL, GRID2, BAIAP2, SLC9A3, PLCB3 and CFTR. Interacts (via proline-rich region) with PDE4D. Interacts with ABI1 (via SH3 domain). In terms of tissue distribution, isoform 3 is present in epithelial colonic cells (at protein level).

It localises to the apical cell membrane. The protein localises to the cytoplasm. It is found in the synapse. The protein resides in the postsynaptic density. Its subcellular location is the cell projection. It localises to the growth cone. The protein localises to the dendritic spine. Its function is as follows. Seems to be an adapter protein in the postsynaptic density (PSD) of excitatory synapses that interconnects receptors of the postsynaptic membrane including NMDA-type and metabotropic glutamate receptors, and the actin-based cytoskeleton. May play a role in the structural and functional organization of the dendritic spine and synaptic junction. In Homo sapiens (Human), this protein is SH3 and multiple ankyrin repeat domains protein 2 (SHANK2).